The chain runs to 943 residues: Isoleucine--tRNA ligase (943 aa).

The 'HIGH' region signature appears at 58 to 68 (PYANGKIHIGH). E567 is a binding site for L-isoleucyl-5'-AMP. Residues 608 to 612 (KMSKS) carry the 'KMSKS' region motif. Position 611 (K611) interacts with ATP. Positions 906, 909, 926, and 929 each coordinate Zn(2+).

The protein belongs to the class-I aminoacyl-tRNA synthetase family. IleS type 1 subfamily. As to quaternary structure, monomer. The cofactor is Zn(2+).

The protein resides in the cytoplasm. It carries out the reaction tRNA(Ile) + L-isoleucine + ATP = L-isoleucyl-tRNA(Ile) + AMP + diphosphate. Functionally, catalyzes the attachment of isoleucine to tRNA(Ile). As IleRS can inadvertently accommodate and process structurally similar amino acids such as valine, to avoid such errors it has two additional distinct tRNA(Ile)-dependent editing activities. One activity is designated as 'pretransfer' editing and involves the hydrolysis of activated Val-AMP. The other activity is designated 'posttransfer' editing and involves deacylation of mischarged Val-tRNA(Ile). The polypeptide is Isoleucine--tRNA ligase (Pseudomonas putida (strain GB-1)).